Consider the following 182-residue polypeptide: ATP synthase subunit delta (182 aa).

The protein belongs to the ATPase delta chain family. As to quaternary structure, F-type ATPases have 2 components, F(1) - the catalytic core - and F(0) - the membrane proton channel. F(1) has five subunits: alpha(3), beta(3), gamma(1), delta(1), epsilon(1). F(0) has three main subunits: a(1), b(2) and c(10-14). The alpha and beta chains form an alternating ring which encloses part of the gamma chain. F(1) is attached to F(0) by a central stalk formed by the gamma and epsilon chains, while a peripheral stalk is formed by the delta and b chains.

It is found in the cell inner membrane. Its function is as follows. F(1)F(0) ATP synthase produces ATP from ADP in the presence of a proton or sodium gradient. F-type ATPases consist of two structural domains, F(1) containing the extramembraneous catalytic core and F(0) containing the membrane proton channel, linked together by a central stalk and a peripheral stalk. During catalysis, ATP synthesis in the catalytic domain of F(1) is coupled via a rotary mechanism of the central stalk subunits to proton translocation. In terms of biological role, this protein is part of the stalk that links CF(0) to CF(1). It either transmits conformational changes from CF(0) to CF(1) or is implicated in proton conduction. The sequence is that of ATP synthase subunit delta from Pseudothermotoga lettingae (strain ATCC BAA-301 / DSM 14385 / NBRC 107922 / TMO) (Thermotoga lettingae).